Here is a 222-residue protein sequence, read N- to C-terminus: ATP-dependent Clp protease proteolytic subunit (222 aa).

S125 (nucleophile) is an active-site residue. H150 is an active-site residue.

It belongs to the peptidase S14 family. In terms of assembly, fourteen ClpP subunits assemble into 2 heptameric rings which stack back to back to give a disk-like structure with a central cavity, resembling the structure of eukaryotic proteasomes.

Its subcellular location is the cytoplasm. The catalysed reaction is Hydrolysis of proteins to small peptides in the presence of ATP and magnesium. alpha-casein is the usual test substrate. In the absence of ATP, only oligopeptides shorter than five residues are hydrolyzed (such as succinyl-Leu-Tyr-|-NHMec, and Leu-Tyr-Leu-|-Tyr-Trp, in which cleavage of the -Tyr-|-Leu- and -Tyr-|-Trp bonds also occurs).. In terms of biological role, cleaves peptides in various proteins in a process that requires ATP hydrolysis. Has a chymotrypsin-like activity. Plays a major role in the degradation of misfolded proteins. In Porphyromonas gingivalis (strain ATCC BAA-308 / W83), this protein is ATP-dependent Clp protease proteolytic subunit.